Consider the following 117-residue polypeptide: Large ribosomal subunit protein uL18 (117 aa).

It belongs to the universal ribosomal protein uL18 family. In terms of assembly, part of the 50S ribosomal subunit; part of the 5S rRNA/L5/L18/L25 subcomplex. Contacts the 5S and 23S rRNAs.

In terms of biological role, this is one of the proteins that bind and probably mediate the attachment of the 5S RNA into the large ribosomal subunit, where it forms part of the central protuberance. In Mycoplasma mobile (strain ATCC 43663 / 163K / NCTC 11711) (Mesomycoplasma mobile), this protein is Large ribosomal subunit protein uL18.